Reading from the N-terminus, the 485-residue chain is Poly(ADP-ribose) glycohydrolase 2 (485 aa).

It belongs to the poly(ADP-ribose) glycohydrolase family. Expressed in head and tail neurons.

It is found in the cytoplasm. The enzyme catalyses [(1''-&gt;2')-ADP-alpha-D-ribose](n) + H2O = [(1''-&gt;2')-ADP-alpha-D-ribose](n-1) + ADP-D-ribose. Poly(ADP-ribose) synthesized after DNA damage is only present transiently and is rapidly degraded by poly(ADP-ribose) glycohydrolase. Poly(ADP-ribose) metabolism may be required for maintenance of the normal function of neuronal cells. The protein is Poly(ADP-ribose) glycohydrolase 2 of Caenorhabditis elegans.